We begin with the raw amino-acid sequence, 497 residues long: Aldehyde dehydrogenase (497 aa).

Residue 242–247 (GSTLVG) coordinates NAD(+). The Proton acceptor role is filled by Glu265. The active-site Nucleophile is Cys299.

Belongs to the aldehyde dehydrogenase family.

It catalyses the reaction an aldehyde + NAD(+) + H2O = a carboxylate + NADH + 2 H(+). It participates in alcohol metabolism; ethanol degradation; acetate from ethanol: step 2/2. This Aspergillus niger protein is Aldehyde dehydrogenase (aldA).